Here is a 21-residue protein sequence, read N- to C-terminus: GLLDFVTGVGKDIFAQLIKQI.

At I21 the chain carries Isoleucine amide.

Expressed by the skin dorsal glands.

It localises to the secreted. In terms of biological role, has hemolytic activity against human erythrocytes (HC50=14.3 uM). Has antibacterial activity against the Gram-positive bacterium S.aureus ATCC 25923 (MIC=64 uM) and the Gram-negative bacterium E.coli ATCC 25922 (MIC=64 uM). The protein is Ocellatin-4 of Leptodactylus ocellatus (Argus frog).